The primary structure comprises 451 residues: Chromosomal replication initiator protein DnaA 2 (451 aa).

The domain I, interacts with DnaA modulators stretch occupies residues 1-68 (MQAWEEFLKA…QQKFINGNNK (68 aa)). The interval 68 to 104 (KRIKIHLSVANTPQRAKKTKTANKEKDFKAPFELTFD) is domain II. Positions 105 to 326 (ELDPLCLFPY…KGLEALVLRL (222 aa)) are domain III, AAA+ region. ATP-binding residues include Gly156, Gly158, Lys159, and Thr160. The tract at residues 327–451 (HLDAKHSITA…CHIILKKLQG (125 aa)) is domain IV, binds dsDNA.

This sequence belongs to the DnaA family. Oligomerizes as a right-handed, spiral filament on DNA at oriC.

Its subcellular location is the cytoplasm. Functionally, plays an essential role in the initiation and regulation of chromosomal replication. ATP-DnaA binds to the origin of replication (oriC) to initiate formation of the DNA replication initiation complex once per cell cycle. Binds the DnaA box (a 9 base pair repeat at the origin) and separates the double-stranded (ds)DNA. Forms a right-handed helical filament on oriC DNA; dsDNA binds to the exterior of the filament while single-stranded (ss)DNA is stabiized in the filament's interior. The ATP-DnaA-oriC complex binds and stabilizes one strand of the AT-rich DNA unwinding element (DUE), permitting loading of DNA polymerase. After initiation quickly degrades to an ADP-DnaA complex that is not apt for DNA replication. Binds acidic phospholipids. The chain is Chromosomal replication initiator protein DnaA 2 from Protochlamydia amoebophila (strain UWE25).